We begin with the raw amino-acid sequence, 270 residues long: Chromo domain-containing protein cec-4 (270 aa).

Disordered stretches follow at residues 1-24 (MAKKTVEGEHGTPKTNFTKKETSK) and 143-229 (KIAQ…KNDV). Positions 87 to 147 (YAVERVLAHR…HQEDLKIAQT (61 aa)) constitute a Chromo domain. 2 stretches are compositionally biased toward basic residues: residues 151–167 (TPSKTPKKTPKSLKRRA) and 187–197 (TPKQSTKKLKR). A compositionally biased stretch (basic and acidic residues) spans 205 to 229 (LVEKSKKKAIPDLENHTLDQEKNDV).

In terms of assembly, interacts with mono-, di- and tri-methylated 'Lys-9' residues on histone H3. Weakly interacts with methylated 'Lys-37' residues on histone H3.

It is found in the nucleus inner membrane. Its subcellular location is the membrane. Functionally, chromatin anchor protein which binds to methylated lysine residues on histone H3, thereby recruiting heterochromatin to the nuclear periphery, especially in embryonic cells, with a lesser role in differentiated cells. May be required for the correct positioning of chromatin and nucleoli in embryos. This is Chromo domain-containing protein cec-4 from Caenorhabditis elegans.